A 47-amino-acid polypeptide reads, in one-letter code: Delta-actitoxin-Aspp1b (47 aa).

Intrachain disulfides connect Cys-4-Cys-44, Cys-6-Cys-34, and Cys-27-Cys-45.

Belongs to the sea anemone sodium channel inhibitory toxin family. Type I subfamily.

It localises to the secreted. Its subcellular location is the nematocyst. Functionally, binds specifically to voltage-gated sodium channels (Nav), thereby delaying their inactivation during signal transduction. Has a longer mammalian heart stimulation effect than Hk2a, Hk8a and Hk16a. In Anthopleura sp. (strain 'Zhanjiang') (Sea anemone), this protein is Delta-actitoxin-Aspp1b.